We begin with the raw amino-acid sequence, 347 residues long: MGLKIHRPRRGSMAYYPRKRASDIVPRIRNWPVIDLGKPTLLGFVGYKAGMVHVTVVDDRKTSPFFGKELVKAVTVVETPPLYVVGLRAYAINPLKAELVSVGEAWVNIPNEVRKYIARRIPTLPEKFDTDKALADLQGLLDSVSYIKVIAMTQPYKAGVGKKTPEVLEIPVGGVPTIDEQFKYASGLLGKEVKPTDVFKPGQLVDVIGVTKGKGTQGVIKRFGVKELPRWHKHRKGSRRTGTVGPKPAVMYTQPRMGQMGFHRRTEYNKRILKISDNGSEITPKGGFKHYGIVRSGYMLIEGSTPGVVKRLIAFRYPIRPPFNYDLKQVQAPSVTWVSVMGVSGVS.

The protein belongs to the universal ribosomal protein uL3 family. As to quaternary structure, part of the 50S ribosomal subunit. Forms a cluster with proteins L14 and L24e.

One of the primary rRNA binding proteins, it binds directly near the 3'-end of the 23S rRNA, where it nucleates assembly of the 50S subunit. In Caldivirga maquilingensis (strain ATCC 700844 / DSM 13496 / JCM 10307 / IC-167), this protein is Large ribosomal subunit protein uL3.